A 1071-amino-acid chain; its full sequence is ATP-dependent helicase/deoxyribonuclease subunit B (1071 aa).

Belongs to the helicase family. AddB/RexB type 2 subfamily. As to quaternary structure, heterodimer of AddA and RexB. It depends on Mg(2+) as a cofactor.

In terms of biological role, the heterodimer acts as both an ATP-dependent DNA helicase and an ATP-dependent, dual-direction single-stranded exonuclease. Recognizes the chi site generating a DNA molecule suitable for the initiation of homologous recombination. This subunit has 5' -&gt; 3' nuclease activity but not helicase activity. This Streptococcus pyogenes serotype M12 (strain MGAS9429) protein is ATP-dependent helicase/deoxyribonuclease subunit B.